A 314-amino-acid chain; its full sequence is MLDFEKPLFEIRNKIDSLKESQEKNEVDLQDEIDMLEASLKRETTKVYTNLKPWDRVQIARLPERPTTLDYIPYIFDSFIELHGDRSFRDDPAMIGGIGYLDGKSVTVIGQQRGKDTKDNIYRNFGMAHPEGYRKALRLMKQAEKFNRPIFTFIDTKGAYPGKAAEERGQSESIAKNLMEMASLTVPVIAVVIGEGGSGGALGIGISNRVLMLENSTYSVISPEGAAALLWKDSNLAQIAAETMKITALDLLDLGIIDEVINEPLGGAQKDEEVQALSIKKMFLKHLNELKQLTPEELANDRFEKFRKIGSVVE.

In terms of domain architecture, CoA carboxyltransferase C-terminal spans 32 to 289 (EIDMLEASLK…KKMFLKHLNE (258 aa)).

It belongs to the AccA family. Acetyl-CoA carboxylase is a heterohexamer composed of biotin carboxyl carrier protein (AccB), biotin carboxylase (AccC) and two subunits each of ACCase subunit alpha (AccA) and ACCase subunit beta (AccD).

The protein localises to the cytoplasm. The enzyme catalyses N(6)-carboxybiotinyl-L-lysyl-[protein] + acetyl-CoA = N(6)-biotinyl-L-lysyl-[protein] + malonyl-CoA. It participates in lipid metabolism; malonyl-CoA biosynthesis; malonyl-CoA from acetyl-CoA: step 1/1. Component of the acetyl coenzyme A carboxylase (ACC) complex. First, biotin carboxylase catalyzes the carboxylation of biotin on its carrier protein (BCCP) and then the CO(2) group is transferred by the carboxyltransferase to acetyl-CoA to form malonyl-CoA. This chain is Acetyl-coenzyme A carboxylase carboxyl transferase subunit alpha, found in Staphylococcus epidermidis (strain ATCC 12228 / FDA PCI 1200).